Here is a 374-residue protein sequence, read N- to C-terminus: RNA binding protein fox-1 homolog 3 (374 aa).

Over residues 1–29 the composition is skewed to pro residues; it reads MAQPYPPAQYPPPPQNGIPAEYAPPPPHP. The segment at 1-105 is disordered; that stretch reads MAQPYPPAQY…QQPKRLHVSN (105 aa). Positions 49–74 are enriched in polar residues; it reads TPAQTHPEQPGTEASTQPIAGTQTVP. Positions 99 to 175 constitute an RRM domain; sequence KRLHVSNIPF…RKIEVNNATA (77 aa). An Asymmetric dimethylarginine; alternate modification is found at Arg-223. At Arg-223 the chain carries Omega-N-methylarginine; alternate. Residue Arg-319 is modified to Asymmetric dimethylarginine.

In terms of processing, phosphorylated. As to expression, widely expressed in brain, including in cerebral cortex, hippocampus, thalamus, caudate/putamen, cerebellum, as well as in the spinal cord (at protein level). Not expressed in all neuronal cells within a region, in cerebellum, expression is absent in Purkinje cells (at protein level). Expressed in the retina in the ganglion cells and some cells in the inner nuclear layer, but absent from the photoreceptor cells and most cells in the inner nuclear layer (at protein level).

Its subcellular location is the nucleus. It is found in the cytoplasm. In terms of biological role, pre-mRNA alternative splicing regulator. Regulates alternative splicing of RBFOX2 to enhance the production of mRNA species that are targeted for nonsense-mediated decay (NMD). The protein is RNA binding protein fox-1 homolog 3 (Rbfox3) of Mus musculus (Mouse).